Consider the following 665-residue polypeptide: Probable potassium transport system protein Kup (665 aa).

Positions 1–18 (MASEAPHASAPDCAPASS) are enriched in low complexity. The segment at 1-31 (MASEAPHASAPDCAPASSDIPQQDGGSTNGH) is disordered. The next 12 membrane-spanning stretches (helical) occupy residues 40–60 (FFAL…TSPL), 83–103 (VVSL…VVFI), 131–151 (LVFV…VITP), 171–191 (GVTN…LFFI), 202–222 (LFGP…LMNL), 245–265 (GLTG…VEAL), 281–301 (WLFF…AFAL), 332–352 (LVLL…TGAF), 380–400 (IFVP…MFTF), 409–429 (AYGL…FIVM), 435–455 (WSMP…ITFL), and 462–482 (FFSG…IMAT).

This sequence belongs to the HAK/KUP transporter (TC 2.A.72) family.

It localises to the cell inner membrane. It catalyses the reaction K(+)(in) + H(+)(in) = K(+)(out) + H(+)(out). Functionally, transport of potassium into the cell. Likely operates as a K(+):H(+) symporter. In Caulobacter vibrioides (strain ATCC 19089 / CIP 103742 / CB 15) (Caulobacter crescentus), this protein is Probable potassium transport system protein Kup.